The chain runs to 617 residues: Probable LRR receptor-like serine/threonine-protein kinase RKF3 (617 aa).

Positions Met1–Ala20 are cleaved as a signal peptide. Residues Gln21–Lys212 are Extracellular-facing. N-linked (GlcNAc...) asparagine glycans are attached at residues Asn22, Asn124, Asn135, and Asn165. The chain crosses the membrane as a helical span at residues Val213–Phe233. Residues Trp234 to Thr617 are Cytoplasmic-facing. The 281-residue stretch at Phe283–Thr563 folds into the Protein kinase domain. ATP-binding positions include Ile289–Val297 and Lys311. Asp412 (proton acceptor) is an active-site residue. The interval Val585–Thr617 is disordered.

The protein belongs to the protein kinase superfamily. Ser/Thr protein kinase family. In terms of tissue distribution, expressed in the whole plant at low levels.

It localises to the cell membrane. The enzyme catalyses L-seryl-[protein] + ATP = O-phospho-L-seryl-[protein] + ADP + H(+). The catalysed reaction is L-threonyl-[protein] + ATP = O-phospho-L-threonyl-[protein] + ADP + H(+). This is Probable LRR receptor-like serine/threonine-protein kinase RKF3 (RKF3) from Arabidopsis thaliana (Mouse-ear cress).